The chain runs to 283 residues: 5'-nucleotidase SurE (283 aa).

A divalent metal cation-binding residues include aspartate 14, aspartate 15, serine 47, and asparagine 105.

The protein belongs to the SurE nucleotidase family. The cofactor is a divalent metal cation.

It is found in the cytoplasm. The enzyme catalyses a ribonucleoside 5'-phosphate + H2O = a ribonucleoside + phosphate. In terms of biological role, nucleotidase that shows phosphatase activity on nucleoside 5'-monophosphates. The polypeptide is 5'-nucleotidase SurE (Chlamydia muridarum (strain MoPn / Nigg)).